We begin with the raw amino-acid sequence, 260 residues long: Phosphatidylglycerol--prolipoprotein diacylglyceryl transferase (260 aa).

3 helical membrane passes run 16 to 36, 55 to 75, and 87 to 107; these read LEFR…YFIV, VIFS…ILFY, and LFAV…VILA. Arginine 138 contacts a 1,2-diacyl-sn-glycero-3-phospho-(1'-sn-glycerol). 2 helical membrane-spanning segments follow: residues 198-218 and 232-252; these read GVVF…VEFF and FSMG…MAVL.

Belongs to the Lgt family.

The protein localises to the cell inner membrane. It catalyses the reaction L-cysteinyl-[prolipoprotein] + a 1,2-diacyl-sn-glycero-3-phospho-(1'-sn-glycerol) = an S-1,2-diacyl-sn-glyceryl-L-cysteinyl-[prolipoprotein] + sn-glycerol 1-phosphate + H(+). The protein operates within protein modification; lipoprotein biosynthesis (diacylglyceryl transfer). In terms of biological role, catalyzes the transfer of the diacylglyceryl group from phosphatidylglycerol to the sulfhydryl group of the N-terminal cysteine of a prolipoprotein, the first step in the formation of mature lipoproteins. The chain is Phosphatidylglycerol--prolipoprotein diacylglyceryl transferase from Geobacter sulfurreducens (strain ATCC 51573 / DSM 12127 / PCA).